The sequence spans 281 residues: MDVRNKTLWILRDYVYILIGAAITAVSFNVFLLPNKIAAGGVSGISTILQSYGFEAAYVQWIINIPLFIAGVILLGGKFGLKTLAGSVFLPLVVFLTRDIQPATHHELLAAIFGGVGIGIGIGIVYLGKGSTGGTALAAQIIHKYSGLSLGKCLAIIDGMIVVTAMIVFNIEQGLYAMLGVYVSSKTIDVVQVGFNRSKMALIITKQEQAVKEAVLQKIDRGVTKISAVGGYTDDDRPILMCVVGQTEFTKLKQIVKQIDESAFVIVADASEVLGEGFKRA.

5 helical membrane passes run 14–34 (YVYILIGAAITAVSFNVFLLP), 56–76 (AAYVQWIINIPLFIAGVILLG), 77–97 (GKFGLKTLAGSVFLPLVVFLT), 108–128 (LLAAIFGGVGIGIGIGIVYLG), and 149–169 (SLGKCLAIIDGMIVVTAMIVF).

It belongs to the UPF0750 family.

The protein localises to the cell membrane. This is UPF0750 membrane protein YvjA (yvjA) from Bacillus subtilis (strain 168).